We begin with the raw amino-acid sequence, 631 residues long: PTS system glucosamine-specific EIICBA component (631 aa).

The region spanning 3 to 382 is the PTS EIIC type-1 domain; that stretch reads KKAFQILQQL…WNLKTPGRET (380 aa). Transmembrane regions (helical) follow at residues 12–32, 56–76, 106–126, 149–169, 196–216, 243–263, 298–318, and 350–370; these read LGRA…LLRF, LIFA…AGLA, HLID…AYLY, IITS…WPLI, LLIP…MMGE, FMMG…LAII, FLFV…VIFV, and VVIP…RFAI. One can recognise a PTS EIIB type-1 domain in the interval 397-478; that stretch reads DQLAFHVLQA…KTIMAGGVPA (82 aa). C419 (phosphocysteine intermediate; for EIIB activity) is an active-site residue. A Phosphocysteine modification is found at C419. A PTS EIIA type-1 domain is found at 515–619; sequence DQVFSEKMMG…SAITPVIFTN (105 aa). The active-site Tele-phosphohistidine intermediate; for EIIA activity is H567. The residue at position 567 (H567) is a Phosphohistidine.

The protein resides in the cell membrane. It carries out the reaction D-glucosamine(out) + N(pros)-phospho-L-histidyl-[protein] = D-glucosamine 6-phosphate(in) + L-histidyl-[protein]. Its function is as follows. The phosphoenolpyruvate-dependent sugar phosphotransferase system (sugar PTS), a major carbohydrate active transport system, catalyzes the phosphorylation of incoming sugar substrates concomitantly with their translocation across the cell membrane. This system is involved in glucosamine transport. In vitro, when expressed in the absence of GamR and NagP, can transport N-acetylglucosamine. Functionally, in addition, plays an important role in the phosphorylation of EIIA-deficient PTS transporters. The EIIA domain can transfer a phosphoryl group to EIIA-deficient PTS transporters, enabling growth with maltose, N-acetylglucosamine, sucrose or trehalose as the sole carbon source. In Bacillus subtilis (strain 168), this protein is PTS system glucosamine-specific EIICBA component.